A 135-amino-acid polypeptide reads, in one-letter code: Helix-loop-helix protein 2 (135 aa).

A disordered region spans residues 1–81 (MMLSPDQAAD…RRATAKYRSA (81 aa)). Residues 10–21 (DSDHPSSTHSDP) show a composition bias toward basic and acidic residues. Positions 68–81 (KRRRRRATAKYRSA) are enriched in basic residues. A bHLH domain is found at 77–129 (KYRSAHATRERIRVEAFNLAFAELRKLLPTLPPDKKLSKIEILRLAICYISYL).

As to quaternary structure, homodimer. Interacts and may form heterodimers with STAT3. In terms of tissue distribution, expressed in developing neurons. Transiently expressed in the cerebellum during postnatal development, exclusively in the premigratory zone of the external granule layer where postmitotic neurons undergo initial stages of neuronal differentiation. Expression is not detected in mature neurons. Expressed in the anterior lobe of the adult pituitary.

The protein localises to the nucleus. In terms of biological role, transcription factor which binds the E box motif 5'-CA[TC][AG]TG-3'. Involved in regulating energy expenditure, body mass, voluntary physical activity, mating behavior and reproductive longevity, acting through the hypothalamic-pituitary-gonadal axis. Acts as a transcriptional activator of target genes, including Ndn, Pcsk1, Mc4r. Is also a transcriptional activator of KISS1. May act centrally to regulate function of both white and brown adipose tissue. Together with NHLH1, required to maintain migration and survival of cells in the anterior extramural migration stream (aes), which forms the precerebellar nuclei. Also, in concert with Nhlh1, may determine fate of gonadotropin releasing hormone-1 (GnRH-1) neurons. The chain is Helix-loop-helix protein 2 (Nhlh2) from Mus musculus (Mouse).